Reading from the N-terminus, the 602-residue chain is Elongation factor 4 (602 aa).

A tr-type G domain is found at 7 to 189 (SRIRNFSIIA…SIVQQVPPPA (183 aa)). Residues 19–24 (DHGKST) and 136–139 (NKID) contribute to the GTP site.

Belongs to the TRAFAC class translation factor GTPase superfamily. Classic translation factor GTPase family. LepA subfamily.

It is found in the cell inner membrane. The catalysed reaction is GTP + H2O = GDP + phosphate + H(+). Functionally, required for accurate and efficient protein synthesis under certain stress conditions. May act as a fidelity factor of the translation reaction, by catalyzing a one-codon backward translocation of tRNAs on improperly translocated ribosomes. Back-translocation proceeds from a post-translocation (POST) complex to a pre-translocation (PRE) complex, thus giving elongation factor G a second chance to translocate the tRNAs correctly. Binds to ribosomes in a GTP-dependent manner. The polypeptide is Elongation factor 4 (Picosynechococcus sp. (strain ATCC 27264 / PCC 7002 / PR-6) (Agmenellum quadruplicatum)).